We begin with the raw amino-acid sequence, 502 residues long: MESLSLIFISFITLIVFLVVSASKKRSHPSGYEPDIPKGGCPMLDSTAYLVLSSPTNTAVTSTGIITSNPENIEHVLKTNFANYPKGEHLTYGLYDLLGRGIFNSDGDHWKLQRKIASLEFNTRTIRHFVTHDVSREVLDRLLPSLSRAANSGEIIDLQEVLDRLAFDNVCKIAFDDDPARLADKKFNDGENDYYGKFAKAFGEAAEISTQRFEKSRWKIARALNLGTERKMKNALAIVNEFAMQVVREMKRKRAEEGKGRGSSADLLSLFISEGEFSDEFLRDVVISFVLAGRDTTSSTMAFFFWQVSTRPSICQKIKEEIVSVRKNHNNSQGGAFTLEELREMDYLHAVLSETLRLYPIVPLHARYTLADDVLPDGTMVKKGSTVMHSIYAMGRMESIWGADCLEFRPERWLENGVFRPKSPFLFPVFLAGPRMCLGKETAYMQMKAVAASVMEKFKIEVADGKHESEREYYLEIVLRLKGGLPVRVTEKEWSDNSAVNV.

Residues 3–23 traverse the membrane as a helical segment; it reads SLSLIFISFITLIVFLVVSAS. Residue C437 participates in heme binding.

It belongs to the cytochrome P450 family. Mainly expressed in leaves and, at low levels, in roots, fruits and stems.

It localises to the membrane. Its pathway is steroid metabolism; cholesterol metabolism. Functionally, involved in the biosynthesis of spiroketal steroid and saponin natural products from cholesterol such as diosgenin and analogs (e.g. furostanol and spirostanol), plant defense compounds used as main precursors for the industrial production of steroid hormones. During the 5,6-spiroketalization of cholesterol, may catalyze the 27-monohydroxylation of furostanol-type steroid to an intermediate product that undergoes a stereospecific formation of the terminal heterocycle to yield diosgenin. The chain is Cytochrome P450 CYP94D109 from Paris polyphylla (Daiswa polyphylla).